The chain runs to 199 residues: Small ribosomal subunit protein uS2 (199 aa).

The protein belongs to the universal ribosomal protein uS2 family.

The chain is Small ribosomal subunit protein uS2 (rps2) from Thermoplasma volcanium (strain ATCC 51530 / DSM 4299 / JCM 9571 / NBRC 15438 / GSS1).